The sequence spans 385 residues: WD repeat-containing protein RUP1 (385 aa).

7 WD repeats span residues 69-108 (TGSD…ESRD), 119-160 (CTPA…PVSE), 163-205 (EHGG…TLEE), 210-250 (GGGA…DPLI), 254-292 (GHTK…RVVR), 298-337 (VNSR…PVWV), and 348-385 (SDRR…GKQS).

Interacts with UVR8. Interacts directly with DHU1.

The protein localises to the nucleus. The protein resides in the cytoplasm. It is found in the cytosol. Functionally, functions in association with RUP2 as repressor of UV-B-induced photomorphogenesis mediated by UVR8 and HY5, likely in coordination with DHU1. Plays a crucial negative feedback regulatory role downstream of UVR8-COP1 to inhibit UVR8 function, balance UV-B-specific responses and ensure normal plant growth. Is involved in the regulation of photoperiodic flowering and vegetative development. This is WD repeat-containing protein RUP1 from Arabidopsis thaliana (Mouse-ear cress).